The primary structure comprises 87 residues: Sec-independent protein translocase protein TatA (87 aa).

Residues 1–21 traverse the membrane as a helical segment; that stretch reads MGSFSIWHWLIVLLIVVMVFG. A disordered region spans residues 40 to 87; sequence KDGMKDGSTPEGTPASTTAATPPAGQVTNQQAHAADPGTIDVEAKHKG. The segment covering 46–64 has biased composition (low complexity); that stretch reads GSTPEGTPASTTAATPPAG.

Belongs to the TatA/E family. As to quaternary structure, the Tat system comprises two distinct complexes: a TatABC complex, containing multiple copies of TatA, TatB and TatC subunits, and a separate TatA complex, containing only TatA subunits. Substrates initially bind to the TatABC complex, which probably triggers association of the separate TatA complex to form the active translocon.

It is found in the cell inner membrane. In terms of biological role, part of the twin-arginine translocation (Tat) system that transports large folded proteins containing a characteristic twin-arginine motif in their signal peptide across membranes. TatA could form the protein-conducting channel of the Tat system. This is Sec-independent protein translocase protein TatA from Paracidovorax citrulli (strain AAC00-1) (Acidovorax citrulli).